The following is a 184-amino-acid chain: Inosine triphosphate pyrophosphatase (184 aa).

Residue 10 to 15 participates in ITP binding; the sequence is TGNVKK. Glu-37 lines the Mg(2+) pocket. ITP contacts are provided by residues Lys-49, 65–66, Lys-82, 141–144, Lys-164, and 169–170; these read DT, FGWD, and HR.

It belongs to the HAM1 NTPase family. Homodimer. Mg(2+) serves as cofactor. Mn(2+) is required as a cofactor.

Its subcellular location is the cytoplasm. The enzyme catalyses ITP + H2O = IMP + diphosphate + H(+). It carries out the reaction dITP + H2O = dIMP + diphosphate + H(+). It catalyses the reaction XTP + H2O = XMP + diphosphate + H(+). Functionally, pyrophosphatase that hydrolyzes non-canonical purine nucleotides such as inosine triphosphate (ITP), deoxyinosine triphosphate (dITP) or xanthosine 5'-triphosphate (XTP) to their respective monophosphate derivatives. The enzyme does not distinguish between the deoxy- and ribose forms. Probably excludes non-canonical purines from RNA and DNA precursor pools, thus preventing their incorporation into RNA and DNA and avoiding chromosomal lesions. The chain is Inosine triphosphate pyrophosphatase from Caenorhabditis elegans.